A 283-amino-acid polypeptide reads, in one-letter code: Pantothenate synthetase (283 aa).

Position 34-41 (34-41) interacts with ATP; that stretch reads MGALHDGH. H41 functions as the Proton donor in the catalytic mechanism. Q65 is a (R)-pantoate binding site. Residue Q65 participates in beta-alanine binding. Residue 152-155 coordinates ATP; that stretch reads GQKD. Residue Q158 participates in (R)-pantoate binding. Residues V181 and 189–192 each bind ATP; that span reads MSSR.

Belongs to the pantothenate synthetase family. As to quaternary structure, homodimer.

The protein localises to the cytoplasm. The catalysed reaction is (R)-pantoate + beta-alanine + ATP = (R)-pantothenate + AMP + diphosphate + H(+). Its pathway is cofactor biosynthesis; (R)-pantothenate biosynthesis; (R)-pantothenate from (R)-pantoate and beta-alanine: step 1/1. Catalyzes the condensation of pantoate with beta-alanine in an ATP-dependent reaction via a pantoyl-adenylate intermediate. This is Pantothenate synthetase from Nitrobacter hamburgensis (strain DSM 10229 / NCIMB 13809 / X14).